Consider the following 686-residue polypeptide: DNA ligase (686 aa).

NAD(+) contacts are provided by residues 45–49 (DNEYD), 94–95 (SL), and Glu127. Lys129 serves as the catalytic N6-AMP-lysine intermediate. 4 residues coordinate NAD(+): Arg150, Glu187, Lys302, and Lys326. Residues Cys420, Cys423, Cys438, and Cys444 each contribute to the Zn(2+) site. The BRCT domain occupies 605–686 (LDNLPLEGQT…DEFLKMIGAS (82 aa)).

This sequence belongs to the NAD-dependent DNA ligase family. LigA subfamily. The cofactor is Mg(2+). Mn(2+) serves as cofactor.

The enzyme catalyses NAD(+) + (deoxyribonucleotide)n-3'-hydroxyl + 5'-phospho-(deoxyribonucleotide)m = (deoxyribonucleotide)n+m + AMP + beta-nicotinamide D-nucleotide.. Functionally, DNA ligase that catalyzes the formation of phosphodiester linkages between 5'-phosphoryl and 3'-hydroxyl groups in double-stranded DNA using NAD as a coenzyme and as the energy source for the reaction. It is essential for DNA replication and repair of damaged DNA. The polypeptide is DNA ligase (Psychrobacter sp. (strain PRwf-1)).